Reading from the N-terminus, the 226-residue chain is Leucyl/phenylalanyl-tRNA--protein transferase (226 aa).

Belongs to the L/F-transferase family.

It localises to the cytoplasm. The catalysed reaction is N-terminal L-lysyl-[protein] + L-leucyl-tRNA(Leu) = N-terminal L-leucyl-L-lysyl-[protein] + tRNA(Leu) + H(+). It catalyses the reaction N-terminal L-arginyl-[protein] + L-leucyl-tRNA(Leu) = N-terminal L-leucyl-L-arginyl-[protein] + tRNA(Leu) + H(+). It carries out the reaction L-phenylalanyl-tRNA(Phe) + an N-terminal L-alpha-aminoacyl-[protein] = an N-terminal L-phenylalanyl-L-alpha-aminoacyl-[protein] + tRNA(Phe). In terms of biological role, functions in the N-end rule pathway of protein degradation where it conjugates Leu, Phe and, less efficiently, Met from aminoacyl-tRNAs to the N-termini of proteins containing an N-terminal arginine or lysine. The chain is Leucyl/phenylalanyl-tRNA--protein transferase from Ectopseudomonas mendocina (strain ymp) (Pseudomonas mendocina).